The primary structure comprises 271 residues: Chymotrypsin-like elastase family member 2A (271 aa).

The signal sequence occupies residues 1–16 (MIRTLLLSALVAGALS). Positions 17–30 (CGYPTYEVQHDVSR) are cleaved as a propeptide — activation peptide. A Peptidase S1 domain is found at 31–269 (VVGGQEASPN…YIDWINSVIA (239 aa)). Cys-60 and Cys-76 are oxidised to a cystine. Active-site charge relay system residues include His-75 and Asp-123. Intrachain disulfides connect Cys-157–Cys-224, Cys-188–Cys-204, and Cys-214–Cys-245. Residue Ser-218 is the Charge relay system of the active site.

It belongs to the peptidase S1 family. Elastase subfamily. As to quaternary structure, interacts with CPA1. Interacts with SERPINA1. As to expression, pancreas.

The protein resides in the secreted. It carries out the reaction Preferential cleavage: Leu-|-Xaa, Met-|-Xaa and Phe-|-Xaa. Hydrolyzes elastin.. Its function is as follows. Elastase that enhances insulin signaling and might have a physiologic role in cellular glucose metabolism. Circulates in plasma and reduces platelet hyperactivation, triggers both insulin secretion and degradation, and increases insulin sensitivity. The polypeptide is Chymotrypsin-like elastase family member 2A (Cela2a) (Rattus norvegicus (Rat)).